We begin with the raw amino-acid sequence, 139 residues long: Protein cornichon homolog 4 (139 aa).

3 helical membrane passes run V5 to I25, I57 to V77, and L118 to N138.

The protein belongs to the cornichon family. Interacts with Sec23/24 complex components SEC24B and SEC24D. Interacts with CCR5. Interacts with ADRB2 in the early secretory pathway.

The protein localises to the membrane. The protein resides in the endoplasmic reticulum. It localises to the endoplasmic reticulum-Golgi intermediate compartment. Its function is as follows. Involved in G protein-coupled receptors (GPCRs) trafficking from the endoplasmic reticulum to the cell surface; it promotes the exit of GPCRs from the early secretory pathway, likely through interaction with the COPII machinery. The chain is Protein cornichon homolog 4 (CNIH4) from Homo sapiens (Human).